Here is a 308-residue protein sequence, read N- to C-terminus: tRNA uridine(34) hydroxylase (308 aa).

The Rhodanese domain maps to 128–222; sequence ADENTVVVDT…YLEEVPREQS (95 aa). Residue cysteine 182 is the Cysteine persulfide intermediate of the active site.

It belongs to the TrhO family.

The catalysed reaction is uridine(34) in tRNA + AH2 + O2 = 5-hydroxyuridine(34) in tRNA + A + H2O. Catalyzes oxygen-dependent 5-hydroxyuridine (ho5U) modification at position 34 in tRNAs. The chain is tRNA uridine(34) hydroxylase from Brucella suis biovar 1 (strain 1330).